The chain runs to 108 residues: MAQNIGLNVQPPKQECKDVNCPFHGTLPVRGQVITGKVVSDKMMGTVVVARDYLHYVRKYNRYEKRISKLHAHNPPCIQAKVGDLVKIAECRPLSKSTTYVVVEVQQP.

The protein belongs to the universal ribosomal protein uS17 family. In terms of assembly, part of the 30S ribosomal subunit.

Functionally, one of the primary rRNA binding proteins, it binds specifically to the 5'-end of 16S ribosomal RNA. The polypeptide is Small ribosomal subunit protein uS17 (Methanoregula boonei (strain DSM 21154 / JCM 14090 / 6A8)).